Here is a 358-residue protein sequence, read N- to C-terminus: Alpha-ketoglutarate-dependent L-arginine hydroxylase (358 aa).

The tract at residues 1 to 21 is disordered; it reads MTESPTTHHGAAPPDSVATPV. Residues 117–135 form a helical membrane-spanning segment; it reads LSFLLMLYAGLLGDVFGWA. 156–158 is an L-arginine binding site; the sequence is LVS. Fe cation-binding residues include H168 and E170. Residue T194 participates in 2-oxoglutarate binding. 268–270 contacts L-arginine; sequence DGD. Residue H316 coordinates Fe cation. Residues R330 and R334 each contribute to the 2-oxoglutarate site. L-arginine is bound at residue R334.

The protein belongs to the clavaminate synthase family. The cofactor is Fe cation.

It is found in the membrane. It catalyses the reaction L-arginine + 2-oxoglutarate + O2 = (2S,3S)-hydroxyarginine + succinate + CO2. Its pathway is antibiotic biosynthesis. Involved in the biosynthesis of capreomycidine, an unusual amino acid used by non-ribosomal peptide synthases (NRPS) to make the tuberactinomycin class of peptide antibiotics such as viomycin and capreomycin. Catalyzes the stereospecific hydroxylation of the C3 of (2S)-arginine to generate (3S)-hydroxy-(2S)-arginine. Usually clavaminic acid synthase-like oxygenases catalyze the formation of threo diastereomers, however VioC produces the erythro diastereomer of beta-carbon-hydroxylated L-arginine. It exerts a broad substrate specificity by accepting the analogs L-homoarginine and L-canavanine for the beta-carbon hydroxylation. This chain is Alpha-ketoglutarate-dependent L-arginine hydroxylase (vioC), found in Streptomyces vinaceus.